Here is a 323-residue protein sequence, read N- to C-terminus: Ubiquinone biosynthesis protein COQ4, mitochondrial (323 aa).

Residues His205, Asp206, His209, and Glu221 each coordinate Zn(2+).

Belongs to the COQ4 family. In terms of assembly, component of a multi-subunit COQ enzyme complex, composed of at least COQ3, COQ4, COQ5, COQ6, COQ7 and COQ9. It depends on Zn(2+) as a cofactor.

It is found in the mitochondrion inner membrane. It catalyses the reaction a 4-hydroxy-3-methoxy-5-(all-trans-polyprenyl)benzoate + H(+) = a 2-methoxy-6-(all-trans-polyprenyl)phenol + CO2. The protein operates within cofactor biosynthesis; ubiquinone biosynthesis. In terms of biological role, lyase that catalyzes the C1-decarboxylation of 4-hydroxy-3-methoxy-5-(all-trans-polyprenyl)benzoic acid into 2-methoxy-6-(all-trans-polyprenyl)phenol during ubiquinone biosynthesis. In Candida albicans (strain SC5314 / ATCC MYA-2876) (Yeast), this protein is Ubiquinone biosynthesis protein COQ4, mitochondrial.